A 166-amino-acid chain; its full sequence is Phosphopantetheine adenylyltransferase (166 aa).

Position 11 (S11) interacts with substrate. Residues 11 to 12 (SF) and H19 contribute to the ATP site. Positions 43, 76, and 90 each coordinate substrate. ATP-binding positions include 91-93 (GLR), E101, and 126-132 (LQPVSSS).

This sequence belongs to the bacterial CoaD family. As to quaternary structure, homohexamer. It depends on Mg(2+) as a cofactor.

It localises to the cytoplasm. The enzyme catalyses (R)-4'-phosphopantetheine + ATP + H(+) = 3'-dephospho-CoA + diphosphate. It functions in the pathway cofactor biosynthesis; coenzyme A biosynthesis; CoA from (R)-pantothenate: step 4/5. Its function is as follows. Reversibly transfers an adenylyl group from ATP to 4'-phosphopantetheine, yielding dephospho-CoA (dPCoA) and pyrophosphate. The protein is Phosphopantetheine adenylyltransferase of Streptococcus equi subsp. equi (strain 4047).